The sequence spans 167 residues: Lipoprotein signal peptidase (167 aa).

4 consecutive transmembrane segments (helical) span residues Thr8–Leu28, Trp46–Phe66, Gln68–Leu88, and Ile101–Gly121. Residues Asp125 and Asp143 contribute to the active site. A helical membrane pass occupies residues Phe139–Phe159.

The protein belongs to the peptidase A8 family.

The protein localises to the cell inner membrane. It catalyses the reaction Release of signal peptides from bacterial membrane prolipoproteins. Hydrolyzes -Xaa-Yaa-Zaa-|-(S,diacylglyceryl)Cys-, in which Xaa is hydrophobic (preferably Leu), and Yaa (Ala or Ser) and Zaa (Gly or Ala) have small, neutral side chains.. Its pathway is protein modification; lipoprotein biosynthesis (signal peptide cleavage). Its function is as follows. This protein specifically catalyzes the removal of signal peptides from prolipoproteins. This is Lipoprotein signal peptidase from Chlamydia trachomatis serovar L2 (strain ATCC VR-902B / DSM 19102 / 434/Bu).